The chain runs to 98 residues: Gas vesicle protein J2 (98 aa).

The tract at residues 75 to 98 is disordered; the sequence is AGVDADDSKSVLERPDPPTTEGSE. Residues 80–90 are compositionally biased toward basic and acidic residues; sequence DDSKSVLERPD.

Belongs to the gas vesicle GvpA family. As to quaternary structure, gvpF to GvpM interact with each other in vitro, and may form multi-subunit complex(es). Interacts with GvpA.

Its subcellular location is the gas vesicle. Its function is as follows. A minor component of the gas vesicle. Proteins GvpF to GvpM might be involved in nucleating gas vesicle formation. Gas vesicles are hollow, gas filled proteinaceous nanostructures found in several microbial planktonic microorganisms. They allow positioning of halobacteria at the optimal depth for growth in the poorly aerated, shallow brine pools of their habitat. Functionally, expression of 2 c-vac DNA fragments containing 2 divergently transcribed regions (gvpE-gvpF-gvpG-gvpH-gvpI-gvpJ-gvpK-gvpL-gvpM and gvpA-gvpC-gvpN-gvpO) allows H.volcanii to produce gas vesicles. The protein is Gas vesicle protein J2 of Halobacterium salinarum (strain ATCC 700922 / JCM 11081 / NRC-1) (Halobacterium halobium).